A 495-amino-acid chain; its full sequence is Omega-crystallin (495 aa).

The protein belongs to the aldehyde dehydrogenase family. In terms of tissue distribution, lens.

In terms of biological role, omega-crystallins are structural components of squids and octopi eye lens. Contains relatively little if any DHAL activity. The sequence is that of Omega-crystallin from Nototodarus sloanii (Wellington flying squid).